A 146-amino-acid polypeptide reads, in one-letter code: UPF0742 protein SPAC977.02 (146 aa).

Residues L38–S60 traverse the membrane as a helical segment.

The protein belongs to the UPF0742 family.

The protein resides in the cytoplasm. Its subcellular location is the nucleus membrane. The chain is UPF0742 protein SPAC977.02 from Schizosaccharomyces pombe (strain 972 / ATCC 24843) (Fission yeast).